Here is a 552-residue protein sequence, read N- to C-terminus: Keratin, type II cytoskeletal 6A (552 aa).

The span at 1-14 (MSTKTVIRSQTSHR) shows a compositional bias: polar residues. A disordered region spans residues 1 to 21 (MSTKTVIRSQTSHRGFSAGSA). Residues 1 to 151 (MSTKTVIRSQ…DPTIQRVRTE (151 aa)) are head. The tract at residues 152–187 (EREQIKTLNNKFASFIDKVRFLEQQNKVLDTKWALL) is coil 1A. One can recognise an IF rod domain in the interval 152-465 (EREQIKTLNN…TLLEGEECRL (314 aa)). The linker 1 stretch occupies residues 188-206 (QEQGTKTVRQGLETLFEQY). The segment at 207-298 (INDLRKELDN…ALYEAELSQM (92 aa)) is coil 1B. The segment at 299–322 (QTHISDTSVVLSMDNNRSLDLDSI) is linker 12. A coil 2 region spans residues 323-461 (IAEVKAQYEE…ATYRTLLEGE (139 aa)). The tail stretch occupies residues 462 to 552 (ECRLNGEGVG…TSSTRKSYRP (91 aa)). A disordered region spans residues 524–552 (ISSGLSSSGGSSSTIKYTTTSSTRKSYRP). The segment covering 525–552 (SSGLSSSGGSSSTIKYTTTSSTRKSYRP) has biased composition (low complexity).

The protein belongs to the intermediate filament family. Heterodimer of a type I and a type II keratin. KRT6 isomers associate with KRT16 and/or KRT17. Interacts with TCHP.

Its function is as follows. Epidermis-specific type I keratin involved in wound healing. Involved in the activation of follicular keratinocytes after wounding, while it does not play a major role in keratinocyte proliferation or migration. Participates in the regulation of epithelial migration by inhibiting the activity of SRC during wound repair. This Rattus norvegicus (Rat) protein is Keratin, type II cytoskeletal 6A (Krt6a).